The sequence spans 336 residues: Ribosomal RNA large subunit methyltransferase F (336 aa).

The protein belongs to the methyltransferase superfamily. METTL16/RlmF family.

It is found in the cytoplasm. It catalyses the reaction adenosine(1618) in 23S rRNA + S-adenosyl-L-methionine = N(6)-methyladenosine(1618) in 23S rRNA + S-adenosyl-L-homocysteine + H(+). Its function is as follows. Specifically methylates the adenine in position 1618 of 23S rRNA. The sequence is that of Ribosomal RNA large subunit methyltransferase F from Serratia proteamaculans (strain 568).